Here is a 301-residue protein sequence, read N- to C-terminus: 2-dehydropantoate 2-reductase (301 aa).

NADP(+)-binding positions include 11–16, Asn-107, and Ala-133; that span reads GAGAMG. Substrate is bound at residue Asn-107. Lys-187 serves as the catalytic Proton donor. Substrate contacts are provided by Asn-191, Asn-195, Asn-205, and Ser-251. Glu-263 contributes to the NADP(+) binding site.

It belongs to the ketopantoate reductase family.

It is found in the cytoplasm. The catalysed reaction is (R)-pantoate + NADP(+) = 2-dehydropantoate + NADPH + H(+). The protein operates within cofactor biosynthesis; (R)-pantothenate biosynthesis; (R)-pantoate from 3-methyl-2-oxobutanoate: step 2/2. Its function is as follows. Catalyzes the NADPH-dependent reduction of ketopantoate into pantoic acid. The polypeptide is 2-dehydropantoate 2-reductase (Listeria innocua serovar 6a (strain ATCC BAA-680 / CLIP 11262)).